We begin with the raw amino-acid sequence, 312 residues long: Urease accessory protein UreD (312 aa).

Residues 1 to 15 (MLAEQFTDKNKHAEQ) are compositionally biased toward basic and acidic residues. A disordered region spans residues 1-24 (MLAEQFTDKNKHAEQELSPGSSAV).

It belongs to the UreD family. As to quaternary structure, ureD, UreF and UreG form a complex that acts as a GTP-hydrolysis-dependent molecular chaperone, activating the urease apoprotein by helping to assemble the nickel containing metallocenter of UreC. The UreE protein probably delivers the nickel.

The protein resides in the cytoplasm. In terms of biological role, required for maturation of urease via the functional incorporation of the urease nickel metallocenter. The protein is Urease accessory protein UreD of Hahella chejuensis (strain KCTC 2396).